Consider the following 382-residue polypeptide: uncharacterized protein (382 aa).

A run of 12 helical transmembrane segments spans residues 14-34 (GLLLLTLAIAVLNTLVPLWLA), 45-65 (VVSSSYFTGNLVGTLLTGYVI), 79-99 (FIFAAGCAGLGLMIGFWSWLA), 102-122 (FVAGVGCAMIWVVVESALMCS), 131-151 (LLAAYMMVYYVGTFLGQLLVS), 157-177 (LMSVLPWVTGLTLAGILPLLF), 204-224 (LGVNGCIISGIVLGSLYGLMP), 235-255 (ASIGFWMAVLVSAGILGQWPI), 270-290 (VQVFVVILGSIAMLSQAAMAP), 291-311 (ALFILGAAGFTLYPVAMAWAC), 325-345 (ALLLSYTVGSLLGPSFTAMLM), and 348-368 (FSDNLLFIMIASVSFIYLLML).

Belongs to the major facilitator superfamily. YcaD (TC 2.A.1.26) family.

Its subcellular location is the cell inner membrane. This is an uncharacterized protein from Escherichia coli O7:K1 (strain IAI39 / ExPEC).